The sequence spans 74 residues: Antimicrobial peptide AcrAP2 (74 aa).

Positions 1–22 are cleaved as a signal peptide; it reads MEIKYLLTVFLVLLIVSDHCQA. Lysine 40 is subject to Lysine amide. Positions 46–74 are excised as a propeptide; the sequence is NLDGQIDRFRNFRKRDAELEELLSKLPIY.

Belongs to the non-disulfide-bridged peptide (NDBP) superfamily. Short antimicrobial peptide (group 4) family. As to expression, expressed by the venom gland.

The protein localises to the secreted. It localises to the target cell membrane. Functionally, has antimicrobial activity against the Gram-positive bacteria S.aureus (MIC=8 uM) and the yeast C.albicans (MIC=16 uM). Causes hemolysis on horse erythrocytes (64 uM for 100% hemolysis). Minimum bactericidal concentrations have also been tested against S.aureus and is four-fold higher (MBC=32 uM). The chain is Antimicrobial peptide AcrAP2 from Androctonus crassicauda (Arabian fat-tailed scorpion).